The sequence spans 675 residues: DNA ligase (675 aa).

NAD(+)-binding positions include 35-39 (DSEYD), 84-85 (SL), and E115. The active-site N6-AMP-lysine intermediate is K117. Residues R138, E175, K292, and K316 each coordinate NAD(+). Zn(2+) is bound by residues C410, C413, C428, and C434. The BRCT domain maps to 593–675 (QIVQPLLGRT…RNFLDDTSFP (83 aa)).

This sequence belongs to the NAD-dependent DNA ligase family. LigA subfamily. Requires Mg(2+) as cofactor. It depends on Mn(2+) as a cofactor.

It carries out the reaction NAD(+) + (deoxyribonucleotide)n-3'-hydroxyl + 5'-phospho-(deoxyribonucleotide)m = (deoxyribonucleotide)n+m + AMP + beta-nicotinamide D-nucleotide.. Its function is as follows. DNA ligase that catalyzes the formation of phosphodiester linkages between 5'-phosphoryl and 3'-hydroxyl groups in double-stranded DNA using NAD as a coenzyme and as the energy source for the reaction. It is essential for DNA replication and repair of damaged DNA. This chain is DNA ligase, found in Nitrosococcus oceani (strain ATCC 19707 / BCRC 17464 / JCM 30415 / NCIMB 11848 / C-107).